We begin with the raw amino-acid sequence, 433 residues long: Histone acetyltransferase type B subunit 2 (433 aa).

WD repeat units follow at residues 131–171 (EHPG…LDPT), 184–224 (GHEA…ADSR), 234–274 (HHTQ…TNKA), 281–321 (GHLD…EKVH), and 325–365 (GHND…EEQL). The interaction with the histone H4 N-terminus stretch occupies residues 367 to 371 (DDQDD). One copy of the WD 6 repeat lies at 382–422 (GHTNHLADFSWNPNEPWLVASAAEDNLLQIWKVAESIVGKD).

It belongs to the WD repeat RBAP46/RBAP48/MSI1 family. Component of the HAT-B complex composed of at least HAT1 and HAT2. The HAT-B complex binds to histone H4 tail.

It localises to the cytoplasm. It is found in the nucleus. Regulatory subunit of the histone acetylase B (HAT-B) complex. The complex acetylates 'Lys-12' of histone H4 which is required for telomeric silencing. The polypeptide is Histone acetyltransferase type B subunit 2 (HAT2) (Gibberella zeae (strain ATCC MYA-4620 / CBS 123657 / FGSC 9075 / NRRL 31084 / PH-1) (Wheat head blight fungus)).